Here is a 324-residue protein sequence, read N- to C-terminus: Acetyl-coenzyme A carboxylase carboxyl transferase subunit alpha (324 aa).

Residues 44–298 (QLERRAEELR…KQTLIDTIDE (255 aa)) form the CoA carboxyltransferase C-terminal domain.

Belongs to the AccA family. As to quaternary structure, acetyl-CoA carboxylase is a heterohexamer composed of biotin carboxyl carrier protein (AccB), biotin carboxylase (AccC) and two subunits each of ACCase subunit alpha (AccA) and ACCase subunit beta (AccD).

The protein resides in the cytoplasm. The catalysed reaction is N(6)-carboxybiotinyl-L-lysyl-[protein] + acetyl-CoA = N(6)-biotinyl-L-lysyl-[protein] + malonyl-CoA. It functions in the pathway lipid metabolism; malonyl-CoA biosynthesis; malonyl-CoA from acetyl-CoA: step 1/1. Functionally, component of the acetyl coenzyme A carboxylase (ACC) complex. First, biotin carboxylase catalyzes the carboxylation of biotin on its carrier protein (BCCP) and then the CO(2) group is transferred by the carboxyltransferase to acetyl-CoA to form malonyl-CoA. The protein is Acetyl-coenzyme A carboxylase carboxyl transferase subunit alpha of Rippkaea orientalis (strain PCC 8801 / RF-1) (Cyanothece sp. (strain PCC 8801)).